We begin with the raw amino-acid sequence, 735 residues long: Polyribonucleotide nucleotidyltransferase (735 aa).

Positions 515 and 521 each coordinate Mg(2+). The KH domain occupies 581-641; it reads PKLELFSVDP…KNVDAAKDYI (61 aa). The tract at residues 649-671 is disordered; the sequence is NSRGFGKKPHGHDRRDKDRQKPT. The S1 motif domain maps to 675–734; that stretch reads GDEFDGVVKSVVDFGAFIELKDGVDGLLHISKIKTPLNVGDRLKVCVSEQKGNKISLSLV.

It belongs to the polyribonucleotide nucleotidyltransferase family. Requires Mg(2+) as cofactor.

Its subcellular location is the cytoplasm. It carries out the reaction RNA(n+1) + phosphate = RNA(n) + a ribonucleoside 5'-diphosphate. In terms of biological role, involved in mRNA degradation. Catalyzes the phosphorolysis of single-stranded polyribonucleotides processively in the 3'- to 5'-direction. This chain is Polyribonucleotide nucleotidyltransferase, found in Campylobacter curvus (strain 525.92).